Reading from the N-terminus, the 319-residue chain is Cobalamin biosynthesis protein CobD (319 aa).

A run of 3 helical transmembrane segments spans residues 54–76, 154–173, and 301–318; these read VLLLLTVLLIVTALSLALVWLSY, GVTAPLFYALIGGAPLALLY, and VLGFLVFLFLLGGFIYAI.

This sequence belongs to the CobD/CbiB family.

It localises to the cell membrane. It functions in the pathway cofactor biosynthesis; adenosylcobalamin biosynthesis. Its function is as follows. Converts cobyric acid to cobinamide by the addition of aminopropanol on the F carboxylic group. The sequence is that of Cobalamin biosynthesis protein CobD from Halalkalibacterium halodurans (strain ATCC BAA-125 / DSM 18197 / FERM 7344 / JCM 9153 / C-125) (Bacillus halodurans).